Consider the following 472-residue polypeptide: Cysteine--tRNA ligase (472 aa).

Cys-29 serves as a coordination point for Zn(2+). Residues 31–41 (ITVYDYCHLGH) carry the 'HIGH' region motif. Residues Cys-214, His-239, and Glu-243 each coordinate Zn(2+). Residues 271–275 (KMSKS) carry the 'KMSKS' region motif. Lys-274 lines the ATP pocket.

This sequence belongs to the class-I aminoacyl-tRNA synthetase family. As to quaternary structure, monomer. Zn(2+) serves as cofactor.

The protein resides in the cytoplasm. It catalyses the reaction tRNA(Cys) + L-cysteine + ATP = L-cysteinyl-tRNA(Cys) + AMP + diphosphate. The polypeptide is Cysteine--tRNA ligase (Picosynechococcus sp. (strain ATCC 27264 / PCC 7002 / PR-6) (Agmenellum quadruplicatum)).